Consider the following 1060-residue polypeptide: DNA-directed RNA polymerase subunit beta (1060 aa).

This sequence belongs to the RNA polymerase beta chain family. In plastids the minimal PEP RNA polymerase catalytic core is composed of four subunits: alpha, beta, beta', and beta''. When a (nuclear-encoded) sigma factor is associated with the core the holoenzyme is formed, which can initiate transcription.

The protein resides in the plastid. It is found in the chloroplast. It catalyses the reaction RNA(n) + a ribonucleoside 5'-triphosphate = RNA(n+1) + diphosphate. DNA-dependent RNA polymerase catalyzes the transcription of DNA into RNA using the four ribonucleoside triphosphates as substrates. This chain is DNA-directed RNA polymerase subunit beta, found in Helianthus annuus (Common sunflower).